The chain runs to 385 residues: 3-hydroxyisobutyryl-CoA hydrolase, mitochondrial (385 aa).

The N-terminal 32 residues, 1–32, are a transit peptide targeting the mitochondrion; it reads MGQPYAWRLLSRVSSFRRASVILQHLRMSMHT. Lys-54, Lys-91, and Lys-100 each carry N6-acetyllysine; alternate. N6-succinyllysine; alternate is present on residues Lys-54, Lys-91, and Lys-100. Residues Glu-120, Gly-145, Glu-168, and Asp-176 each contribute to the substrate site. Lys-220 is modified (N6-acetyllysine; alternate). Lys-220 is modified (N6-succinyllysine; alternate). Ser-233 carries the phosphoserine modification. An N6-succinyllysine mark is found at Lys-249 and Lys-256. Lys-296 is modified (N6-acetyllysine; alternate). An N6-succinyllysine; alternate modification is found at Lys-296. Lys-300 carries the N6-succinyllysine modification. Lys-352 carries the N6-acetyllysine; alternate modification. Lys-352 carries the N6-succinyllysine; alternate modification. 2 positions are modified to N6-acetyllysine: Lys-359 and Lys-364. An N6-succinyllysine modification is found at Lys-376.

The protein belongs to the enoyl-CoA hydratase/isomerase family.

Its subcellular location is the mitochondrion. The catalysed reaction is 3-hydroxy-2-methylpropanoyl-CoA + H2O = 3-hydroxy-2-methylpropanoate + CoA + H(+). It participates in amino-acid degradation; L-valine degradation. In terms of biological role, hydrolyzes 3-hydroxyisobutyryl-CoA (HIBYL-CoA), a saline catabolite. Has high activity toward isobutyryl-CoA. Could be an isobutyryl-CoA dehydrogenase that functions in valine catabolism. Also hydrolyzes 3-hydroxypropanoyl-CoA. This is 3-hydroxyisobutyryl-CoA hydrolase, mitochondrial (Hibch) from Mus musculus (Mouse).